Here is a 389-residue protein sequence, read N- to C-terminus: Protein IQ-domain 26 (389 aa).

2 IQ domains span residues 106–134 and 135–157; these read ERWAAVKIQSVFKGYLARKALRALKGLVK and LQALVRGYLVRKRAAETLHSMQA. The tract at residues 137–151 is calmodulin-binding; that stretch reads ALVRGYLVRKRAAET. The disordered stretch occupies residues 347–374; it reads SVSGVRMVQPQPQPQTQTQQQKRSPCSY.

The protein belongs to the IQD family. In terms of assembly, binds to multiple calmodulin (CaM) in the presence of Ca(2+) and CaM-like proteins.

The protein localises to the cell membrane. It localises to the cytoplasm. Its subcellular location is the cytoskeleton. Functionally, may be involved in cooperative interactions with calmodulins or calmodulin-like proteins. Recruits calmodulin proteins to microtubules, thus being a potential scaffold in cellular signaling and trafficking. May associate with nucleic acids and regulate gene expression at the transcriptional or post-transcriptional level. This Arabidopsis thaliana (Mouse-ear cress) protein is Protein IQ-domain 26.